The following is a 239-amino-acid chain: ATP synthase subunit a (239 aa).

The next 5 membrane-spanning stretches (helical) occupy residues 17–37 (GTVC…VYFF), 75–95 (FHLL…IGLI), 113–133 (DPFV…LFGV), 182–202 (LLTL…PLAI), and 206–226 (MVWI…FVTL).

This sequence belongs to the ATPase A chain family. In terms of assembly, F-type ATPases have 2 components, CF(1) - the catalytic core - and CF(0) - the membrane proton channel. CF(1) has five subunits: alpha(3), beta(3), gamma(1), delta(1), epsilon(1). CF(0) has three main subunits: a(1), b(2) and c(9-12). The alpha and beta chains form an alternating ring which encloses part of the gamma chain. CF(1) is attached to CF(0) by a central stalk formed by the gamma and epsilon chains, while a peripheral stalk is formed by the delta and b chains.

The protein resides in the cell membrane. Its function is as follows. Key component of the proton channel; it plays a direct role in the translocation of protons across the membrane. The protein is ATP synthase subunit a of Enterococcus hirae (strain ATCC 9790 / DSM 20160 / JCM 8729 / LMG 6399 / NBRC 3181 / NCIMB 6459 / NCDO 1258 / NCTC 12367 / WDCM 00089 / R).